Here is a 131-residue protein sequence, read N- to C-terminus: L-ectoine synthase (131 aa).

Belongs to the ectoine synthase family.

It catalyses the reaction (2S)-4-acetamido-2-aminobutanoate = L-ectoine + H2O. It functions in the pathway amine and polyamine biosynthesis; ectoine biosynthesis; L-ectoine from L-aspartate 4-semialdehyde: step 3/3. In terms of biological role, catalyzes the circularization of gamma-N-acetyl-alpha,gamma-diaminobutyric acid (ADABA) to ectoine (1,4,5,6-tetrahydro-2-methyl-4-pyrimidine carboxylic acid), which is an excellent osmoprotectant. In Nocardia farcinica (strain IFM 10152), this protein is L-ectoine synthase.